Reading from the N-terminus, the 167-residue chain is MTKEEKAIIIQEVAQKIAGAATFYITDGSGMTVDQVNKFRKLCFSKGVEYKVVKNSLIKKALQQLNIDHTALNGAALKGASGLMFSDTANVPAKLLKQFHKGGVAKPEFKGASVFADFYVGKDKLDALASIKSKEELIGDIIALLQAPAQRVIGGLTNESRVFAEQA.

The protein belongs to the universal ribosomal protein uL10 family. In terms of assembly, part of the ribosomal stalk of the 50S ribosomal subunit. The N-terminus interacts with L11 and the large rRNA to form the base of the stalk. The C-terminus forms an elongated spine to which L12 dimers bind in a sequential fashion forming a multimeric L10(L12)X complex.

Its function is as follows. Forms part of the ribosomal stalk, playing a central role in the interaction of the ribosome with GTP-bound translation factors. This chain is Large ribosomal subunit protein uL10, found in Cytophaga hutchinsonii (strain ATCC 33406 / DSM 1761 / CIP 103989 / NBRC 15051 / NCIMB 9469 / D465).